We begin with the raw amino-acid sequence, 113 residues long: Carboxysome shell protein CcmK4 (113 aa).

One can recognise a BMC domain in the interval 5 to 91 (AIGSLETKGF…PHENVEAVFP (87 aa)).

It belongs to the bacterial microcompartments protein family. CcmK subfamily. As to quaternary structure, homohexamer. Interacts stably with CcmK3, probably forms heterohexamers with a 1:2 CcmK3:CcmK4 stoichiometry.

It localises to the carboxysome. Its function is as follows. One of the shell proteins of the carboxysome, a polyhedral inclusion where RuBisCO (ribulose bisphosphate carboxylase, rbcL-rbcS) is sequestered. Assembles into hexamers which make sheets that form the facets of the polyhedral carboxysome. The hexamer central pore probably regulates metabolite flux. In terms of biological role, a minor shell protein of the carboxysome, a polyhedral inclusion where RuBisCO (ribulose bisphosphate carboxylase, rbcL-rbcS) is sequestered. Hexamers form sheets that form the facets of the polyhedral carboxysome. The shell is 4.5 nm thick, as observed for CcmK proteins. In PCC 7942 there are several CcmK paralogs with presumably functional differences; replacing the central pore residues (34-37) with those of CcmK2 from this organism (Tyr-Glu-Lys-Ile) allows the bacterium to make carboxysomes, but the expression level is too low to know if the carboxysome is functional for CO(2) fixation. This subunit probably makes both homohexamers and heterohexamers with CcmK3. The CcmK3-CcmK4 heterohexmers have been suggested to cap other hexamers, perhaps to alter metabolite flux. The protein is Carboxysome shell protein CcmK4 of Synechococcus elongatus (strain ATCC 33912 / PCC 7942 / FACHB-805) (Anacystis nidulans R2).